The sequence spans 168 residues: Phosphopantetheine adenylyltransferase (168 aa).

A substrate-binding site is contributed by Thr-9. ATP contacts are provided by residues 9 to 10 and His-17; that span reads TF. Positions 41, 74, and 88 each coordinate substrate. Residues 89-91, Glu-99, and 124-130 each bind ATP; these read GLR and LQPIASR.

This sequence belongs to the bacterial CoaD family. Homohexamer. Mg(2+) serves as cofactor.

The protein resides in the cytoplasm. The catalysed reaction is (R)-4'-phosphopantetheine + ATP + H(+) = 3'-dephospho-CoA + diphosphate. Its pathway is cofactor biosynthesis; coenzyme A biosynthesis; CoA from (R)-pantothenate: step 4/5. Its function is as follows. Reversibly transfers an adenylyl group from ATP to 4'-phosphopantetheine, yielding dephospho-CoA (dPCoA) and pyrophosphate. The protein is Phosphopantetheine adenylyltransferase of Sphingopyxis alaskensis (strain DSM 13593 / LMG 18877 / RB2256) (Sphingomonas alaskensis).